Here is a 395-residue protein sequence, read N- to C-terminus: Ribosomal RNA large subunit methyltransferase I (395 aa).

In terms of domain architecture, PUA spans Ser2 to Phe79.

Belongs to the methyltransferase superfamily. RlmI family.

It is found in the cytoplasm. The catalysed reaction is cytidine(1962) in 23S rRNA + S-adenosyl-L-methionine = 5-methylcytidine(1962) in 23S rRNA + S-adenosyl-L-homocysteine + H(+). Functionally, specifically methylates the cytosine at position 1962 (m5C1962) of 23S rRNA. The polypeptide is Ribosomal RNA large subunit methyltransferase I (Pseudoalteromonas atlantica (strain T6c / ATCC BAA-1087)).